The chain runs to 181 residues: Inner membrane-spanning protein YciB (181 aa).

5 helical membrane-spanning segments follow: residues 10 to 30, 50 to 70, 72 to 92, 118 to 138, and 148 to 168; these read LIIF…GALI, MHLI…ILHD, SFIK…LGVS, VTWY…YVAF, and FKVF…VLYL.

This sequence belongs to the YciB family.

The protein localises to the cell inner membrane. In terms of biological role, plays a role in cell envelope biogenesis, maintenance of cell envelope integrity and membrane homeostasis. This is Inner membrane-spanning protein YciB from Shewanella halifaxensis (strain HAW-EB4).